Here is a 313-residue protein sequence, read N- to C-terminus: 18S rRNA aminocarboxypropyltransferase (313 aa).

Residues 1–30 (MGKGKNKMHEPKNGRPQRGANGHSSRQNHR) form a disordered region. The S-adenosyl-L-methionine site is built by Ser-62, Val-110, Leu-133, and Trp-148. Residues 215 to 228 (KETQERKSRAKEED) show a composition bias toward basic and acidic residues. Residues 215–313 (KETQERKSRA…SYDPLGNLIR (99 aa)) form a disordered region. Over residues 237-246 (RRGNGSQSDT) the composition is skewed to polar residues. A compositionally biased stretch (acidic residues) spans 247–257 (SESEENSEQSD). Residues Ser-286 and Ser-289 each carry the phosphoserine modification.

This sequence belongs to the TDD superfamily. TSR3 family.

The protein resides in the cytoplasm. It localises to the nucleus. It carries out the reaction an N(1)-methylpseudouridine in rRNA + S-adenosyl-L-methionine = N(1)-methyl-N(3)-[(3S)-3-amino-3-carboxypropyl]pseudouridine in rRNA + S-methyl-5'-thioadenosine + H(+). It catalyses the reaction N(1)-methylpseudouridine(1191) in yeast 18S rRNA + S-adenosyl-L-methionine = N(1)-methyl-N(3)-[(3S)-3-amino-3-carboxypropyl]pseudouridine(1191) in yeast 18S rRNA + S-methyl-5'-thioadenosine + H(+). Aminocarboxypropyltransferase that catalyzes the aminocarboxypropyl transfer on pseudouridine at position 1191 (Psi1191) in 18S rRNA. It constitutes the last step in biosynthesis of the hypermodified N1-methyl-N3-(3-amino-3-carboxypropyl) pseudouridine (m1acp3-Psi) conserved in eukaryotic 18S rRNA. Required for processing 35S pre-rRNA at site D. This chain is 18S rRNA aminocarboxypropyltransferase, found in Saccharomyces cerevisiae (strain ATCC 204508 / S288c) (Baker's yeast).